Here is a 406-residue protein sequence, read N- to C-terminus: Ubiquitin-like modifier-activating enzyme 5 (406 aa).

5 residues coordinate ATP: Gly82, Asp103, Lys126, Asn149, and Asn183. The Zn(2+) site is built by Cys225 and Cys228. Residue Cys249 is the Glycyl thioester intermediate of the active site. Positions 302 and 307 each coordinate Zn(2+). Residues 373–397 (EAPSKSTETTSEATTTTTGDETSLD) are disordered. Over residues 378 to 393 (STETTSEATTTTTGDE) the composition is skewed to low complexity.

It belongs to the ubiquitin-activating E1 family. UBA5 subfamily.

E1-like enzyme which activates UFM1. The protein is Ubiquitin-like modifier-activating enzyme 5 of Drosophila willistoni (Fruit fly).